Reading from the N-terminus, the 67-residue chain is DNA-directed RNA polymerase subunit omega (67 aa).

The protein belongs to the RNA polymerase subunit omega family. The RNAP catalytic core consists of 2 alpha, 1 beta, 1 beta' and 1 omega subunit. When a sigma factor is associated with the core the holoenzyme is formed, which can initiate transcription.

The catalysed reaction is RNA(n) + a ribonucleoside 5'-triphosphate = RNA(n+1) + diphosphate. Its function is as follows. Promotes RNA polymerase assembly. Latches the N- and C-terminal regions of the beta' subunit thereby facilitating its interaction with the beta and alpha subunits. In Listeria innocua serovar 6a (strain ATCC BAA-680 / CLIP 11262), this protein is DNA-directed RNA polymerase subunit omega.